Here is an 805-residue protein sequence, read N- to C-terminus: Angiotensin-converting enzyme 2 (805 aa).

The first 17 residues, 1-17 (MSGSFWLLLSFAALTAA), serve as a signal peptide directing secretion. The Extracellular portion of the chain corresponds to 18 to 740 (QSTTEELAKT…LSPPYRPPVT (723 aa)). One can recognise a Peptidase M2 domain in the interval 19–607 (STTEELAKTF…QNRNSFVGWD (589 aa)). The interaction with SARS S protein stretch occupies residues 30 to 41 (ETFNYEAQELSY). N-linked (GlcNAc...) asparagine glycosylation is present at Asn-53. Interaction with SARS S protein stretches follow at residues 82–84 (TYP) and 90–93 (DAKI). A disulfide bridge links Cys-133 with Cys-141. Chloride is bound at residue Arg-169. The N-linked (GlcNAc...) asparagine glycan is linked to Asn-216. A substrate-binding site is contributed by Arg-273. Asn-322 carries N-linked (GlcNAc...) asparagine glycosylation. Cys-344 and Cys-361 are joined by a disulfide. 345-346 (HP) contributes to the substrate binding site. The interval 353-357 (KGDFR) is interaction with SARS S protein. His-374 provides a ligand contact to Zn(2+). Catalysis depends on Glu-375, which acts as the Proton acceptor. Positions 378 and 402 each coordinate Zn(2+). Positions 477 and 481 each coordinate chloride. The Proton donor role is filled by His-505. Tyr-515 serves as a coordination point for substrate. A disulfide bond links Cys-530 and Cys-542. An N-linked (GlcNAc...) asparagine glycan is attached at Asn-546. Residues 614–805 (SDQSIKVRIS…QHADDVQTSF (192 aa)) enclose the Collectrin-like domain. The interval 652–659 (REYFSKVK) is essential for cleavage by ADAM17. Residues Asn-660 and Asn-690 are each glycosylated (N-linked (GlcNAc...) asparagine). The segment at 697–716 (RSEVEDAIRMSRSRINDAFR) is essential for cleavage by TMPRSS11D and TMPRSS2. Residues 741 to 761 (IWLIVFGVVMGAIVVGIVLLI) traverse the membrane as a helical segment. The Cytoplasmic portion of the chain corresponds to 762-805 (VSGIRNRRKNDQAGSEENPYASVDLNKGENNPGFQHADDVQTSF). The interval 771–805 (NDQAGSEENPYASVDLNKGENNPGFQHADDVQTSF) is disordered. Positions 778-786 (ENPYASVDL) match the LIR motif. At Tyr-781 the chain carries Phosphotyrosine. The Endocytic sorting signal motif lies at 781–784 (YASV). The SH2-binding signature appears at 781 to 785 (YASVD). Ser-783 is subject to Phosphoserine. The PTB motif lies at 792–795 (NPGF). Residues 803 to 805 (TSF) carry the PDZ-binding motif.

The protein belongs to the peptidase M2 family. Homodimer. Interacts with the catalytically active form of TMPRSS2. Interacts with SLC6A19; this interaction is essential for expression and function of SLC6A19 in intestine. Interacts with ITGA5:ITGB1. Probably interacts (via endocytic sorting signal motif) with AP2M1; the interaction is inhibited by phosphorylation of Tyr-781. Interacts (via PDZ-binding motif) with NHERF1 (via PDZ domains); the interaction may enhance ACE2 membrane residence. As to quaternary structure, (Microbial infection) Interacts with SARS-CoV S protein. Requires Zn(2+) as cofactor. Chloride is required as a cofactor. Proteolytic cleavage by ADAM17 generates a secreted form. Also cleaved by serine proteases: TMPRSS2, TMPRSS11D and HPN/TMPRSS1. Post-translationally, phosphorylated. Phosphorylation at Tyr-781 probably inhibits interaction with AP2M1 and enables interactions with proteins containing SH2 domains.

The protein resides in the secreted. It is found in the cell membrane. It localises to the cytoplasm. The protein localises to the cell projection. Its subcellular location is the cilium. The protein resides in the apical cell membrane. The enzyme catalyses angiotensin II + H2O = angiotensin-(1-7) + L-phenylalanine. It catalyses the reaction angiotensin I + H2O = angiotensin-(1-9) + L-leucine. Its function is as follows. Essential counter-regulatory carboxypeptidase of the renin-angiotensin hormone system that is a critical regulator of blood volume, systemic vascular resistance, and thus cardiovascular homeostasis. Converts angiotensin I to angiotensin 1-9, a nine-amino acid peptide with anti-hypertrophic effects in cardiomyocytes, and angiotensin II to angiotensin 1-7, which then acts as a beneficial vasodilator and anti-proliferation agent, counterbalancing the actions of the vasoconstrictor angiotensin II. Also removes the C-terminal residue from three other vasoactive peptides, neurotensin, kinetensin, and des-Arg bradykinin, but is not active on bradykinin. Also cleaves other biological peptides, such as apelins, casomorphins and dynorphin A. Plays an important role in amino acid transport by acting as binding partner of amino acid transporter SLC6A19 in intestine, regulating trafficking, expression on the cell surface, and its catalytic activity. In terms of biological role, (Microbial infection) Acts as a receptor for human coronavirus SARS. In Paguma larvata (Masked palm civet), this protein is Angiotensin-converting enzyme 2 (ACE2).